The sequence spans 235 residues: Transmembrane emp24 domain-containing protein 9 (235 aa).

Positions 1–37 (MAAERSLWVVGLCPGSRLGRVVRVLLLLLWFAARGGA) are cleaved as a signal peptide. The Lumenal segment spans residues 38–201 (LYFHIGETEK…FRQTSESTNQ (164 aa)). The 99-residue stretch at 47–145 (KKCFIEEIPD…MLRVHLDIQV (99 aa)) folds into the GOLD domain. Residues 121–160 (CLHSNSTKFSLFAGGMLRVHLDIQVGEHANDYAEIAAKDK) are required for interaction with STX17. Asparagine 125 is a glycosylation site (N-linked (GlcNAc...) asparagine). Positions 154–184 (EIAAKDKLSELQLRVRQLVEQVEQIQKEQNY) form a coiled coil. Position 160 is an N6-acetyllysine (lysine 160). Residues 202–222 (RVLWWSILQTLILVAIGVWQM) traverse the membrane as a helical segment. The Cytoplasmic segment spans residues 223–235 (RHLKSFFEAKKLV). Residues 228-229 (FF) carry the COPII vesicle coat-binding motif. Residues 228–235 (FFEAKKLV) carry the COPI vesicle coat-binding motif.

The protein belongs to the EMP24/GP25L family. Monomer and homodimer in endoplasmic reticulum. Predominantly monomeric and to lesser extent homodimeric in endoplasmic reticulum-Golgi intermediate compartment and cis-Golgi network. Probably oligomerizes with other members of the EMP24/GP25L family such as TMED2, TMED7 and TMED10. Interacts with TMED5. Interacts (via C-terminus) with COPG1; the interaction involves dimeric TMED9. Interacts with PTPN2 and SPAST. Interacts with STX17; the interaction is direct. In terms of processing, N-linked glycosylated containing high mannose.

Its subcellular location is the endoplasmic reticulum membrane. The protein localises to the golgi apparatus. It localises to the cis-Golgi network membrane. It is found in the endoplasmic reticulum-Golgi intermediate compartment membrane. The protein resides in the trans-Golgi network membrane. In terms of biological role, appears to be involved in vesicular protein trafficking, mainly in the early secretory pathway. In COPI vesicle-mediated retrograde transport involved in the coatomer recruitment to membranes of the early secretory pathway. Increases coatomer-dependent activity of ARFGAP2. Thought to play a crucial role in the specific retention of p24 complexes in cis-Golgi membranes; specifically contributes to the coupled localization of TMED2 and TMED10 in the cis-Golgi network. May be involved in organization of intracellular membranes, such as of the ER-Golgi intermediate compartment and the Golgi apparatus. Involved in ER localization of PTPN2. The sequence is that of Transmembrane emp24 domain-containing protein 9 (TMED9) from Bos taurus (Bovine).